The sequence spans 285 residues: Vacuolar protein sorting-associated protein 37B (285 aa).

The interaction with IST1 stretch occupies residues 50–170 (ASNRSLAEGN…ELVLKGQRHP (121 aa)). One can recognise a VPS37 C-terminal domain in the interval 84 to 173 (FEAYQIKKTK…LKGQRHPQAG (90 aa)). Disordered regions lie at residues 167 to 215 (QRHP…PPVP) and 242 to 285 (PLPP…FILQ). 2 stretches are compositionally biased toward pro residues: residues 173-184 (GAPPPPRVPEPS) and 206-215 (RIPPPPPPVP). The span at 250–259 (PSQQGFSAQL) shows a compositional bias: polar residues. A compositionally biased stretch (pro residues) spans 262–275 (PYPPALPQRPPPRM). Over residues 276–285 (APHQPGFILQ) the composition is skewed to low complexity.

This sequence belongs to the VPS37 family. In terms of assembly, component of the ESCRT-I complex (endosomal sorting complex required for transport I) which consists of TSG101, VPS28, a VPS37 protein (VPS37A to -D) and MVB12A or MVB12B in a 1:1:1:1 stoichiometry. Interacts with TSG101, VPS28, MVB12A and MVB12B. Component of the ESCRT-I complex (endosomal sorting complex required for transport I) which consists of TSG101, VPS28, a VPS37 protein (VPS37A to -D) and UBAP1 in a 1:1:1:1 stoichiometry. Interacts with CEP55. Interacts with IST1.

Its subcellular location is the late endosome membrane. Its function is as follows. Component of the ESCRT-I complex, a regulator of vesicular trafficking process. Required for the sorting of endocytic ubiquitinated cargos into multivesicular bodies. May be involved in cell growth and differentiation. In Mus musculus (Mouse), this protein is Vacuolar protein sorting-associated protein 37B (Vps37b).